We begin with the raw amino-acid sequence, 468 residues long: Bone morphogenetic protein 3 (468 aa).

The N-terminal stretch at 1 to 22 (MAGARGLLCLWLGYFCLNLAQG) is a signal peptide. A propeptide spanning residues 23–358 (QRPNLHLPGL…EQTLKKARRK (336 aa)) is cleaved from the precursor. Residues 29–53 (LPGLRETEPSDRATGGSPSPDLRPH) are disordered. Residues Asn115, Asn139, Asn171, and Asn216 are each glycosylated (N-linked (GlcNAc...) asparagine). A disordered region spans residues 314–349 (RKPYKSLQTQPPEKSRNKKKQRKGSHQKGQTLQFDE). The span at 329–339 (RNKKKQRKGSH) shows a compositional bias: basic residues. A compositionally biased stretch (polar residues) spans 340–349 (QKGQTLQFDE). 3 cysteine pairs are disulfide-bonded: Cys366-Cys433, Cys395-Cys465, and Cys399-Cys467. A glycan (N-linked (GlcNAc...) asparagine) is linked at Asn459.

This sequence belongs to the TGF-beta family. In terms of assembly, homodimer; disulfide-linked.

The protein localises to the secreted. In terms of biological role, negatively regulates bone density. Antagonizes the ability of certain osteogenic BMPs to induce osteoprogenitor differentiation and ossification. This Mus musculus (Mouse) protein is Bone morphogenetic protein 3 (Bmp3).